The primary structure comprises 260 residues: Small ribosomal subunit protein uS2 (260 aa).

Residues 223–260 are disordered; sequence EGRQGEDEEEASQEVAEGVSKDSLEDLKKSVEEGSNEE. The segment covering 241–254 has biased composition (basic and acidic residues); the sequence is VSKDSLEDLKKSVE.

Belongs to the universal ribosomal protein uS2 family.

This is Small ribosomal subunit protein uS2 from Pediococcus pentosaceus (strain ATCC 25745 / CCUG 21536 / LMG 10740 / 183-1w).